We begin with the raw amino-acid sequence, 84 residues long: Large ribosomal subunit protein bL31B (84 aa).

This sequence belongs to the bacterial ribosomal protein bL31 family. Type B subfamily. Part of the 50S ribosomal subunit.

In Acinetobacter baumannii (strain AB307-0294), this protein is Large ribosomal subunit protein bL31B.